The sequence spans 59 residues: UPF0181 protein YoaH (59 aa).

It belongs to the UPF0181 family.

The protein is UPF0181 protein YoaH of Shigella flexneri serotype 5b (strain 8401).